We begin with the raw amino-acid sequence, 124 residues long: Large ribosomal subunit protein bL12 (124 aa).

The protein belongs to the bacterial ribosomal protein bL12 family. Homodimer. Part of the ribosomal stalk of the 50S ribosomal subunit. Forms a multimeric L10(L12)X complex, where L10 forms an elongated spine to which 2 to 4 L12 dimers bind in a sequential fashion. Binds GTP-bound translation factors.

Its function is as follows. Forms part of the ribosomal stalk which helps the ribosome interact with GTP-bound translation factors. Is thus essential for accurate translation. In Brucella abortus (strain S19), this protein is Large ribosomal subunit protein bL12.